Reading from the N-terminus, the 28-residue chain is GVFCGELCIKASCSIPGCECIAGLCYKN.

3 cysteine pairs are disulfide-bonded: cysteine 4–cysteine 18, cysteine 8–cysteine 20, and cysteine 13–cysteine 25.

Post-translationally, this is a cyclic peptide. Contains 3 disulfide bonds.

Probably participates in a plant defense mechanism. The protein is Cyclotide vodo I2 of Viola odorata (Sweet violet).